A 389-amino-acid polypeptide reads, in one-letter code: Carbamoyl phosphate synthase small chain (389 aa).

Positions 1–199 (MFNPAILVLA…AGKPFNLQTT (199 aa)) are CPSase. S50, G251, and G253 together coordinate L-glutamine. A Glutamine amidotransferase type-1 domain is found at 203-389 (HVVAYDFGIK…FINAVQATKA (187 aa)). The Nucleophile role is filled by C279. L-glutamine contacts are provided by L280, Q283, N321, G323, and F324. Active-site residues include H363 and E365.

It belongs to the CarA family. Composed of two chains; the small (or glutamine) chain promotes the hydrolysis of glutamine to ammonia, which is used by the large (or ammonia) chain to synthesize carbamoyl phosphate. Tetramer of heterodimers (alpha,beta)4.

It carries out the reaction hydrogencarbonate + L-glutamine + 2 ATP + H2O = carbamoyl phosphate + L-glutamate + 2 ADP + phosphate + 2 H(+). It catalyses the reaction L-glutamine + H2O = L-glutamate + NH4(+). It participates in amino-acid biosynthesis; L-arginine biosynthesis; carbamoyl phosphate from bicarbonate: step 1/1. Its pathway is pyrimidine metabolism; UMP biosynthesis via de novo pathway; (S)-dihydroorotate from bicarbonate: step 1/3. Small subunit of the glutamine-dependent carbamoyl phosphate synthetase (CPSase). CPSase catalyzes the formation of carbamoyl phosphate from the ammonia moiety of glutamine, carbonate, and phosphate donated by ATP, constituting the first step of 2 biosynthetic pathways, one leading to arginine and/or urea and the other to pyrimidine nucleotides. The small subunit (glutamine amidotransferase) binds and cleaves glutamine to supply the large subunit with the substrate ammonia. The polypeptide is Carbamoyl phosphate synthase small chain (Haemophilus ducreyi (strain 35000HP / ATCC 700724)).